Consider the following 261-residue polypeptide: Triosephosphate isomerase (261 aa).

Substrate is bound at residue 10–12 (NWK). His100 acts as the Electrophile in catalysis. Glu172 functions as the Proton acceptor in the catalytic mechanism. Substrate contacts are provided by residues Gly178, Ser218, and 239 to 240 (GG).

Belongs to the triosephosphate isomerase family. In terms of assembly, homodimer.

The protein localises to the cytoplasm. The enzyme catalyses D-glyceraldehyde 3-phosphate = dihydroxyacetone phosphate. It participates in carbohydrate biosynthesis; gluconeogenesis. Its pathway is carbohydrate degradation; glycolysis; D-glyceraldehyde 3-phosphate from glycerone phosphate: step 1/1. Involved in the gluconeogenesis. Catalyzes stereospecifically the conversion of dihydroxyacetone phosphate (DHAP) to D-glyceraldehyde-3-phosphate (G3P). The polypeptide is Triosephosphate isomerase (Mycolicibacterium vanbaalenii (strain DSM 7251 / JCM 13017 / BCRC 16820 / KCTC 9966 / NRRL B-24157 / PYR-1) (Mycobacterium vanbaalenii)).